The sequence spans 212 residues: uncharacterized protein (212 aa).

Positions 53, 74, and 96 each coordinate S-adenosyl-L-methionine.

It belongs to the methyltransferase superfamily. YrrT family.

Could be a S-adenosyl-L-methionine-dependent methyltransferase. This is an uncharacterized protein from Anoxybacillus flavithermus (strain DSM 21510 / WK1).